The sequence spans 72 residues: Translation initiation factor IF-1 (72 aa).

One can recognise an S1-like domain in the interval 1–72 (MAKDDVIEVE…TRGRITYRYK (72 aa)). The residue at position 60 (Y60) is a Phosphotyrosine.

Belongs to the IF-1 family. As to quaternary structure, component of the 30S ribosomal translation pre-initiation complex which assembles on the 30S ribosome in the order IF-2 and IF-3, IF-1 and N-formylmethionyl-tRNA(fMet); mRNA recruitment can occur at any time during PIC assembly.

Its subcellular location is the cytoplasm. Functionally, one of the essential components for the initiation of protein synthesis. Stabilizes the binding of IF-2 and IF-3 on the 30S subunit to which N-formylmethionyl-tRNA(fMet) subsequently binds. Helps modulate mRNA selection, yielding the 30S pre-initiation complex (PIC). Upon addition of the 50S ribosomal subunit IF-1, IF-2 and IF-3 are released leaving the mature 70S translation initiation complex. The sequence is that of Translation initiation factor IF-1 from Geobacillus thermodenitrificans (strain NG80-2).